The primary structure comprises 479 residues: Glucan 1,3-beta-glucosidase 2 (479 aa).

A signal peptide spans 1-21; the sequence is MMLFLIHLMALCCMFVAEVAC. 6 N-linked (GlcNAc...) asparagine glycosylation sites follow: Asn-25, Asn-29, Asn-63, Asn-104, Asn-187, and Asn-193. The active-site Proton donor is Glu-227. 3 N-linked (GlcNAc...) asparagine glycosylation sites follow: Asn-254, Asn-285, and Asn-288. The active-site Nucleophile is His-306. N-linked (GlcNAc...) asparagine glycosylation is found at Asn-318 and Asn-451. The GPI-anchor amidated serine moiety is linked to residue Ser-456. The propeptide at 457 to 479 is removed in mature form; that stretch reads SASAIASNKMTLLLAFLLVILVI.

This sequence belongs to the glycosyl hydrolase 5 (cellulase A) family. Predicted to be a substrate for cleavage by KEX2.

It localises to the cell membrane. The protein localises to the secreted. It carries out the reaction Successive hydrolysis of beta-D-glucose units from the non-reducing ends of (1-&gt;3)-beta-D-glucans, releasing alpha-glucose.. In terms of biological role, beta-glucanases participate in the metabolism of beta-glucan, the main structural component of the cell wall. EXG2 is not heavily involved in the exoglucanase function of the adhesion process. The polypeptide is Glucan 1,3-beta-glucosidase 2 (EXG2) (Candida albicans (strain SC5314 / ATCC MYA-2876) (Yeast)).